The sequence spans 183 residues: MVMNTDSLALIKNSIKTIPNYPKEGILFRDVTSLLEDPQAYKLTIGLLVEHYKDQGFTKVVGTEARGFLFGAPLALELGIGFVPVRKPGKLPRETISESYELEYGHDVLEIHVDAINAEDKVLVIDDLLATGGTIEATVKLIRQLGGSVNDAAFVISLPDLGGEQRLEKMDLKLVSLCEFEGE.

Belongs to the purine/pyrimidine phosphoribosyltransferase family. As to quaternary structure, homodimer.

The protein resides in the cytoplasm. The catalysed reaction is AMP + diphosphate = 5-phospho-alpha-D-ribose 1-diphosphate + adenine. It functions in the pathway purine metabolism; AMP biosynthesis via salvage pathway; AMP from adenine: step 1/1. Functionally, catalyzes a salvage reaction resulting in the formation of AMP, that is energically less costly than de novo synthesis. This is Adenine phosphoribosyltransferase from Shewanella halifaxensis (strain HAW-EB4).